The sequence spans 284 residues: 2-dehydro-3-deoxyphosphooctonate aldolase (284 aa).

This sequence belongs to the KdsA family.

The protein localises to the cytoplasm. It carries out the reaction D-arabinose 5-phosphate + phosphoenolpyruvate + H2O = 3-deoxy-alpha-D-manno-2-octulosonate-8-phosphate + phosphate. Its pathway is carbohydrate biosynthesis; 3-deoxy-D-manno-octulosonate biosynthesis; 3-deoxy-D-manno-octulosonate from D-ribulose 5-phosphate: step 2/3. It participates in bacterial outer membrane biogenesis; lipopolysaccharide biosynthesis. This Cronobacter sakazakii (strain ATCC BAA-894) (Enterobacter sakazakii) protein is 2-dehydro-3-deoxyphosphooctonate aldolase.